The primary structure comprises 455 residues: ATP-dependent protease ATPase subunit HslU (455 aa).

ATP contacts are provided by residues V23, 65-70, D266, E333, and R405; that span reads GVGKTE.

It belongs to the ClpX chaperone family. HslU subfamily. As to quaternary structure, a double ring-shaped homohexamer of HslV is capped on each side by a ring-shaped HslU homohexamer. The assembly of the HslU/HslV complex is dependent on binding of ATP.

Its subcellular location is the cytoplasm. In terms of biological role, ATPase subunit of a proteasome-like degradation complex; this subunit has chaperone activity. The binding of ATP and its subsequent hydrolysis by HslU are essential for unfolding of protein substrates subsequently hydrolyzed by HslV. HslU recognizes the N-terminal part of its protein substrates and unfolds these before they are guided to HslV for hydrolysis. The polypeptide is ATP-dependent protease ATPase subunit HslU (Xanthomonas campestris pv. campestris (strain 8004)).